The following is a 327-amino-acid chain: Probable protein phosphatase 2C 59 (327 aa).

An N-terminal signal peptide occupies residues 1–24 (MREVLLLGSLVVLALLSLFPCCSC). The 247-residue stretch at 64–310 (SYGYASSPGK…DNITCLVVRF (247 aa)) folds into the PPM-type phosphatase domain. Positions 100, 101, 262, and 301 each coordinate Mn(2+).

Belongs to the PP2C family. Requires Mg(2+) as cofactor. Mn(2+) is required as a cofactor.

It catalyses the reaction O-phospho-L-seryl-[protein] + H2O = L-seryl-[protein] + phosphate. The enzyme catalyses O-phospho-L-threonyl-[protein] + H2O = L-threonyl-[protein] + phosphate. The protein is Probable protein phosphatase 2C 59 of Oryza sativa subsp. japonica (Rice).